Reading from the N-terminus, the 193-residue chain is dCTP deaminase (193 aa).

DCTP-binding positions include 110-115 (RSSLAR), Asp-128, 136-138 (VLE), Tyr-171, Lys-178, and Gln-182. The Proton donor/acceptor role is filled by Glu-138. The disordered stretch occupies residues 174–193 (RKNAKYKDQQEAVASRISQD).

This sequence belongs to the dCTP deaminase family. In terms of assembly, homotrimer.

It catalyses the reaction dCTP + H2O + H(+) = dUTP + NH4(+). The protein operates within pyrimidine metabolism; dUMP biosynthesis; dUMP from dCTP (dUTP route): step 1/2. Catalyzes the deamination of dCTP to dUTP. The protein is dCTP deaminase of Shewanella sp. (strain W3-18-1).